Here is a 284-residue protein sequence, read N- to C-terminus: Probable palmitoyltransferase ZDHHC24 (284 aa).

Over 1–18 (MGEPWAARGTEGAPARMP) the chain is Cytoplasmic. Residues 19-39 (VVFTALWAAVVVLELTYVMVL) traverse the membrane as a helical segment. Residues 40–52 (GPGPPPLEPLARA) lie on the Extracellular side of the membrane. A helical membrane pass occupies residues 53–73 (LQLALAAYQLLNLLGNMGLFL). Topologically, residues 74–137 (RSDPSIRGVM…GRCVGFHNYR (64 aa)) are cytoplasmic. A DHHC domain is found at 94–144 (AYCYQCQSQVPPRSGHCSACRVCILRRDHHCRLLGRCVGFHNYRPFLCLLL). Residue C124 is the S-palmitoyl cysteine intermediate of the active site. Residues 138-158 (PFLCLLLHAAGVLLHISVLLS) form a helical membrane-spanning segment. Residues 159 to 166 (PALSALLQ) lie on the Extracellular side of the membrane. Residues 167 to 187 (AHSALYTVALLLLPWLMLLTG) traverse the membrane as a helical segment. Over 188–195 (KVSLAQFA) the chain is Cytoplasmic. Residues 196–216 (LAFVVDTCVAGALLCGAGLLF) form a helical membrane-spanning segment. Over 217–284 (HGMLLLRGQT…TPTDVGLVTS (68 aa)) the chain is Extracellular.

This sequence belongs to the DHHC palmitoyltransferase family.

It is found in the membrane. The enzyme catalyses L-cysteinyl-[protein] + hexadecanoyl-CoA = S-hexadecanoyl-L-cysteinyl-[protein] + CoA. Functionally, probable palmitoyltransferase that could catalyze the addition of palmitate onto various protein substrates. This Rattus norvegicus (Rat) protein is Probable palmitoyltransferase ZDHHC24 (Zdhhc24).